The primary structure comprises 417 residues: Snake venom metalloproteinase acutolysin-C (417 aa).

An N-terminal signal peptide occupies residues M1–S20. A propeptide spans I21–P189 (activation peptide). Residues T197–S392 enclose the Peptidase M12B domain. Cystine bridges form between C308–C387, C349–C371, and C351–C354. Residue H333 coordinates Zn(2+). Residue E334 is part of the active site. Zn(2+) contacts are provided by H337 and H343. The propeptide occupies L393 to A417. A disordered region spans residues V398–A417. Residues P407–A417 are compositionally biased toward acidic residues.

This sequence belongs to the venom metalloproteinase (M12B) family. P-I subfamily. Monomer. Zn(2+) serves as cofactor. As to expression, expressed by the venom gland.

It localises to the secreted. This protein is an alkaline zinc metalloprotease from snake venom that possesses weak hemorrhagic activity. In Deinagkistrodon acutus (Hundred-pace snake), this protein is Snake venom metalloproteinase acutolysin-C.